We begin with the raw amino-acid sequence, 283 residues long: NAD kinase (283 aa).

Asp-66 functions as the Proton acceptor in the catalytic mechanism. NAD(+)-binding positions include 66-67 (DG), 140-141 (ND), Arg-151, Lys-168, Asp-170, 181-186 (TGYCLS), and Gln-240.

The protein belongs to the NAD kinase family. Requires a divalent metal cation as cofactor.

It is found in the cytoplasm. It catalyses the reaction NAD(+) + ATP = ADP + NADP(+) + H(+). Its function is as follows. Involved in the regulation of the intracellular balance of NAD and NADP, and is a key enzyme in the biosynthesis of NADP. Catalyzes specifically the phosphorylation on 2'-hydroxyl of the adenosine moiety of NAD to yield NADP. This chain is NAD kinase, found in Geobacter metallireducens (strain ATCC 53774 / DSM 7210 / GS-15).